The following is a 440-amino-acid chain: Exosome complex component RRP45 (440 aa).

Ser-65 is modified (phosphoserine). The residue at position 297 (Lys-297) is an N6-acetyllysine; alternate. Lys-297 participates in a covalent cross-link: Glycyl lysine isopeptide (Lys-Gly) (interchain with G-Cter in SUMO1); alternate. Lys-297 participates in a covalent cross-link: Glycyl lysine isopeptide (Lys-Gly) (interchain with G-Cter in SUMO2); alternate. Phosphoserine is present on residues Ser-306 and Ser-346. Residues 341–362 (EGIENSWGHLEDSEKEDEDEGG) form a disordered region. The span at 353 to 362 (SEKEDEDEGG) shows a compositional bias: acidic residues. 2 positions are modified to phosphoserine: Ser-393 and Ser-395. The tract at residues 404 to 440 (EPDKNPKKIRTQTISATQVKAPSKKPVKKRKKKRAAN) is disordered. Residues 425–440 (PSKKPVKKRKKKRAAN) show a composition bias toward basic residues.

It belongs to the RNase PH family. Component of the RNA exosome core complex (Exo-9), composed of EXOSC1, EXOSC2, EXOSC3, EXOSC4, EXOSC5, EXOSC6, EXOSC7, EXOSC8 and EXOSC9; within the complex interacts with EXOSC3, EXOSC4, EXOSC5 and DIS3. The catalytically inactive RNA exosome core complex (Exo-9) associates with the catalytic subunit EXOSC10/RRP6. Exo-9 may associate with DIS3 to form the nucleolar exosome complex, or DIS3L to form the cytoplasmic exosome complex. Exo-9 is formed by a hexameric base ring consisting of the heterodimers EXOSC4-EXOSC9, EXOSC5-EXOSC8 and EXOSC6-EXOSC7, and a cap ring consisting of EXOSC1, EXOSC2 and EXOSC3. The RNA exosome complex associates with cofactors C1D/RRP47, MPHOSPH6/MPP6 and MTREX/MTR4. Interacts (via C-terminus region) with SETX (via N-terminus domain); the interaction enhances SETX sumoylation. Interacts with DIS3; the interaction is direct.

The protein resides in the cytoplasm. It is found in the nucleus. Its subcellular location is the nucleolus. It localises to the nucleoplasm. Its function is as follows. Non-catalytic component of the RNA exosome complex which has 3'-&gt;5' exoribonuclease activity and participates in a multitude of cellular RNA processing and degradation events. In the nucleus, the RNA exosome complex is involved in proper maturation of stable RNA species such as rRNA, snRNA and snoRNA, in the elimination of RNA processing by-products and non-coding 'pervasive' transcripts, such as antisense RNA species and promoter-upstream transcripts (PROMPTs), and of mRNAs with processing defects, thereby limiting or excluding their export to the cytoplasm. The RNA exosome may be involved in Ig class switch recombination (CSR) and/or Ig variable region somatic hypermutation (SHM) by targeting AICDA deamination activity to transcribed dsDNA substrates. In the cytoplasm, the RNA exosome complex is involved in general mRNA turnover and specifically degrades inherently unstable mRNAs containing AU-rich elements (AREs) within their 3' untranslated regions, and in RNA surveillance pathways, preventing translation of aberrant mRNAs. It seems to be involved in degradation of histone mRNA. The catalytic inactive RNA exosome core complex of 9 subunits (Exo-9) is proposed to play a pivotal role in the binding and presentation of RNA for ribonucleolysis, and to serve as a scaffold for the association with catalytic subunits and accessory proteins or complexes. EXOSC9 binds to ARE-containing RNAs. The protein is Exosome complex component RRP45 (EXOSC9) of Bos taurus (Bovine).